Here is a 237-residue protein sequence, read N- to C-terminus: MTKSQNVDPAEIKKFEDMASRWWDLEGEFKPLHQINPLRLNYVLEKTEGLFGKKVLDVGCGGGILAESMAVEGAVVTGLDMGKEPLEVARLHALETGTKLDYIQSTIEDHAEQNPQAYDVVTCMEMLEHVPDPQSVITACSKLVKPGGHVFFSTLNRNFKSYLFAIVGAEKLLKIVPEGTHDHEKFIRPAELIKMIDNTPLQELGITGLHYNPLTDTYRLGTNVDVNYIVHTQNLTQ.

S-adenosyl-L-methionine is bound by residues Arg39, Gly59, Asp80, and Met124.

It belongs to the methyltransferase superfamily. UbiG/COQ3 family.

The catalysed reaction is a 3-demethylubiquinol + S-adenosyl-L-methionine = a ubiquinol + S-adenosyl-L-homocysteine + H(+). It carries out the reaction a 3-(all-trans-polyprenyl)benzene-1,2-diol + S-adenosyl-L-methionine = a 2-methoxy-6-(all-trans-polyprenyl)phenol + S-adenosyl-L-homocysteine + H(+). It functions in the pathway cofactor biosynthesis; ubiquinone biosynthesis. In terms of biological role, O-methyltransferase that catalyzes the 2 O-methylation steps in the ubiquinone biosynthetic pathway. This chain is Ubiquinone biosynthesis O-methyltransferase, found in Vibrio atlanticus (strain LGP32) (Vibrio splendidus (strain Mel32)).